We begin with the raw amino-acid sequence, 318 residues long: uncharacterized protein (318 aa).

This is an uncharacterized protein from Ostreid herpesvirus 1 (isolate France) (OsHV-1).